Consider the following 229-residue polypeptide: MELLLLSNSTLPGKAWLEHALPLIAEQLQGRRSAVFIPFAGVTQTCDDYTAKTAAVLAPLGVSVTGIHSVVDPVAAIENAEIVIVGGGNTFQLLKQCRERGLLAPITDVVKRGALYIGWSAGANLACPTIRTTNDMPIVDPQGFDALNLFPLQINPHFTNALPEGHKGETREQRIRELLVVAPELTIIGLPEGNWITVSKGHATLGGPNTTYVFKAGEEAVPLEAGHRF.

Catalysis depends on charge relay system residues Ser-120, Asp-135, and His-157.

It belongs to the peptidase S51 family.

Its subcellular location is the cytoplasm. The enzyme catalyses Dipeptidase E catalyzes the hydrolysis of dipeptides Asp-|-Xaa. It does not act on peptides with N-terminal Glu, Asn or Gln, nor does it cleave isoaspartyl peptides.. Functionally, hydrolyzes dipeptides containing N-terminal aspartate residues. May play a role in allowing the cell to use peptide aspartate to spare carbon otherwise required for the synthesis of the aspartate family of amino acids. This chain is Peptidase E, found in Shigella sonnei (strain Ss046).